The following is a 240-amino-acid chain: Ubiquitin domain-containing protein 2 (240 aa).

The disordered stretch occupies residues 1–48 (MGGCVGSHHDSSGSLNENSDGTGVALGRNQPLKREKPKWKSDYPMTDG). Residues 12–21 (SGSLNENSDG) show a composition bias toward polar residues. Residues 32–41 (LKREKPKWKS) show a composition bias toward basic and acidic residues. The Ubiquitin-like domain maps to 152-227 (CQLRLRLSTG…VQVIVSQPPT (76 aa)).

It localises to the cytoplasm. This chain is Ubiquitin domain-containing protein 2 (ubtd2), found in Danio rerio (Zebrafish).